Reading from the N-terminus, the 393-residue chain is METTVGALGENTTDTFTDFFSALDGHEAQTGSLPFTFSYGDYDMPLDEEEDVTNSRTFFAAKIVIGMALVGIMLVCGIGNFIFITALARYKKLRNLTNLLIANLAISDFLVAIVCCPFEMDYYVVRQLSWEHGHVLCASVNYLRTVSLYVSTNALLAIAIDRYLAIVHPLRPRMKCQTAAGLIFLVWSVSILIAIPAAYFTTETVLVIVERQEKIFCGQIWPVDQQFYYRSYFLLVFGLEFVGPVVAMTLCYARVSRELWFKAVPGFQTEQIRRRLRCRRRTVLGLVCVLSAYVLCWAPFYGFTIVRDFFPSVFVKEKHYLTAFYVVECIAMSNSMINTLCFVTVRNNTSKYLKRILRLQWRASPSGSKASADLDLRTTGIPATEEVDCIRLK.

Over 1 to 62 (METTVGALGE…TNSRTFFAAK (62 aa)) the chain is Extracellular. N11 carries an N-linked (GlcNAc...) asparagine glycan. Residues 63–83 (IVIGMALVGIMLVCGIGNFIF) traverse the membrane as a helical segment. The Cytoplasmic segment spans residues 84 to 98 (ITALARYKKLRNLTN). The helical transmembrane segment at 99-119 (LLIANLAISDFLVAIVCCPFE) threads the bilayer. Residues 120–146 (MDYYVVRQLSWEHGHVLCASVNYLRTV) lie on the Extracellular side of the membrane. Residues C137 and C217 are joined by a disulfide bond. Residues 147 to 167 (SLYVSTNALLAIAIDRYLAIV) form a helical membrane-spanning segment. Topologically, residues 168–179 (HPLRPRMKCQTA) are cytoplasmic. The chain crosses the membrane as a helical span at residues 180-200 (AGLIFLVWSVSILIAIPAAYF). Over 201-232 (TTETVLVIVERQEKIFCGQIWPVDQQFYYRSY) the chain is Extracellular. Residues 233-253 (FLLVFGLEFVGPVVAMTLCYA) form a helical membrane-spanning segment. Residues 254–282 (RVSRELWFKAVPGFQTEQIRRRLRCRRRT) lie on the Cytoplasmic side of the membrane. The helical transmembrane segment at 283 to 303 (VLGLVCVLSAYVLCWAPFYGF) threads the bilayer. Topologically, residues 304–322 (TIVRDFFPSVFVKEKHYLT) are extracellular. Residues 323 to 343 (AFYVVECIAMSNSMINTLCFV) traverse the membrane as a helical segment. The Cytoplasmic segment spans residues 344 to 393 (TVRNNTSKYLKRILRLQWRASPSGSKASADLDLRTTGIPATEEVDCIRLK).

Belongs to the G-protein coupled receptor 1 family. As to expression, expressed at high levels in the heart, skeletal muscle and pancreas. Expressed at lower levels in the brain, lung, liver and kidney.

It is found in the cell membrane. In terms of biological role, receptor for prokineticin 1. Exclusively coupled to the G(q) subclass of heteromeric G proteins. Activation leads to mobilization of calcium, stimulation of phosphoinositide turnover and activation of p44/p42 mitogen-activated protein kinase. May play a role during early pregnancy. In Mus musculus (Mouse), this protein is Prokineticin receptor 1 (Prokr1).